Reading from the N-terminus, the 474-residue chain is tRNA-2-methylthio-N(6)-dimethylallyladenosine synthase (474 aa).

The 118-residue stretch at 3-120 (KKLHIKTWGC…LPEMIDQVQR (118 aa)) folds into the MTTase N-terminal domain. Positions 12, 49, 83, 157, 161, and 164 each coordinate [4Fe-4S] cluster. One can recognise a Radical SAM core domain in the interval 143–375 (RADGPTAFVS…QDRITQQAMR (233 aa)). A TRAM domain is found at 378-441 (RQMLGTVQRI…TNSLRGIFIR (64 aa)).

Belongs to the methylthiotransferase family. MiaB subfamily. In terms of assembly, monomer. The cofactor is [4Fe-4S] cluster.

It localises to the cytoplasm. It catalyses the reaction N(6)-dimethylallyladenosine(37) in tRNA + (sulfur carrier)-SH + AH2 + 2 S-adenosyl-L-methionine = 2-methylsulfanyl-N(6)-dimethylallyladenosine(37) in tRNA + (sulfur carrier)-H + 5'-deoxyadenosine + L-methionine + A + S-adenosyl-L-homocysteine + 2 H(+). In terms of biological role, catalyzes the methylthiolation of N6-(dimethylallyl)adenosine (i(6)A), leading to the formation of 2-methylthio-N6-(dimethylallyl)adenosine (ms(2)i(6)A) at position 37 in tRNAs that read codons beginning with uridine. The sequence is that of tRNA-2-methylthio-N(6)-dimethylallyladenosine synthase from Shewanella denitrificans (strain OS217 / ATCC BAA-1090 / DSM 15013).